The sequence spans 852 residues: Protein SBE22 (852 aa).

A disordered region spans residues 1–158 (MTSIQERGTS…ADKSKINTFP (158 aa)). Positions 15–26 (SLKEGEASDRSS) are enriched in basic and acidic residues. The span at 43–61 (PPSQTTLGRSRAGSNTMNK) shows a compositional bias: polar residues. Phosphoserine is present on S72. The segment covering 74 to 96 (NLLSNMNCSDNGNGGNMLNSFVN) has biased composition (polar residues). Residues 124–139 (TTEVFSSTSASSSLGD) show a composition bias toward low complexity. S201 carries the post-translational modification Phosphoserine. Residues 206–248 (AAEKTMNKSRHSYQEQFSSKKSQSSLLNSKQRSRAKSQTCSST) are disordered. Residues 224-235 (SKKSQSSLLNSK) show a composition bias toward low complexity. A phosphoserine mark is found at S459, S517, and S520.

It belongs to the SBE2 family.

The protein localises to the cytoplasm. The protein resides in the golgi apparatus. Its function is as follows. With SBE2, is involved in cell wall integrity and polarity processes like bud growth, through the transport of CHS3 and UTR2 to sites of growth. The protein is Protein SBE22 (SBE22) of Saccharomyces cerevisiae (strain YJM789) (Baker's yeast).